The chain runs to 1651 residues: Alsin (1651 aa).

3 RCC1 repeats span residues 59-108 (DGEV…AVTE), 109-167 (SGVV…ALSI), and 169-218 (REIW…ALVQ). Residues 444 to 476 (REEQVKQESLQGKKSSSLMDIREEESEGGSRRL) are disordered. The span at 450 to 461 (QESLQGKKSSSL) shows a compositional bias: polar residues. 4 positions are modified to phosphoserine: S459, S460, S477, and S486. Phosphothreonine is present on T504. RCC1 repeat units follow at residues 519–570 (RTEV…ALTA) and 572–621 (SQVY…FLVD). N6-acetyllysine is present on K527. The DH domain occupies 684–879 (GYIASLHELA…ESLALHLGKK (196 aa)). The PH domain maps to 895-1001 (GKMTDSLRKP…RAISQAVDQA (107 aa)). 8 MORN repeats span residues 1043 to 1065 (YDGRWLSGKPHGRGVLKWPDGKV), 1066 to 1088 (YSGTFRNGLEDGYGEYRIPNKAL), 1094 to 1116 (YVGHWKEGKMCGQGVYSYASGEV), 1117 to 1139 (FEGCFQDNMRHGHGLLRSGKLTS), 1145 to 1167 (FIGQWVMDKKAGYGVFDDITRGE), 1169 to 1191 (YMGMWQDDACQGNGVVVTQFGLY), 1192 to 1214 (YEGNFHLNKMMGNGVLLSEDDTI), and 1215 to 1238 (YEGEFSDDWTLCGKGTLTMPNGDY). Position 1329 is a phosphoserine (S1329). Residues 1507–1651 (KQPDIALLGF…YYQIQREKLN (145 aa)) form the VPS9 domain.

Forms a heteromeric complex with ALS2CL. Interacts with ALS2CL.

Functionally, may act as a GTPase regulator. Controls survival and growth of spinal motoneurons. In Rattus norvegicus (Rat), this protein is Alsin (Als2).